The primary structure comprises 201 residues: 3-isopropylmalate dehydratase small subunit (201 aa).

It belongs to the LeuD family. LeuD type 1 subfamily. Heterodimer of LeuC and LeuD.

The enzyme catalyses (2R,3S)-3-isopropylmalate = (2S)-2-isopropylmalate. It participates in amino-acid biosynthesis; L-leucine biosynthesis; L-leucine from 3-methyl-2-oxobutanoate: step 2/4. Catalyzes the isomerization between 2-isopropylmalate and 3-isopropylmalate, via the formation of 2-isopropylmaleate. This Cytophaga hutchinsonii (strain ATCC 33406 / DSM 1761 / CIP 103989 / NBRC 15051 / NCIMB 9469 / D465) protein is 3-isopropylmalate dehydratase small subunit.